Reading from the N-terminus, the 596-residue chain is Zinc finger CCCH domain-containing protein 64 (596 aa).

2 disordered regions span residues 243–263 and 272–291; these read LSPT…PPKT and DGAA…SQYW. 2 consecutive C3H1-type zinc fingers follow at residues 303–331 and 335–363; these read SQGE…HNAE and QCRR…HEFQ.

The sequence is that of Zinc finger CCCH domain-containing protein 64 from Arabidopsis thaliana (Mouse-ear cress).